The chain runs to 216 residues: TATA-box-binding protein-like 1 (216 aa).

Tandem repeats lie at residues Lys38–Gly121 and Phe126–Gln210.

It belongs to the TBP family.

It localises to the nucleus. TATA box-binding transcription factor. Members of the TBP family are differentially required to regulate transcription and development during early embryogenesis. The sequence is that of TATA-box-binding protein-like 1 (trf1) from Entamoeba histolytica (strain ATCC 30459 / HM-1:IMSS / ABRM).